We begin with the raw amino-acid sequence, 525 residues long: Cobyric acid synthase (525 aa).

The GATase cobBQ-type domain maps to 251–452; the sequence is ELEIAVLYLP…FHGIFDNDLL (202 aa). C332 (nucleophile) is an active-site residue. H444 is a catalytic residue.

The protein belongs to the CobB/CobQ family. CobQ subfamily.

It functions in the pathway cofactor biosynthesis; adenosylcobalamin biosynthesis. Functionally, catalyzes amidations at positions B, D, E, and G on adenosylcobyrinic A,C-diamide. NH(2) groups are provided by glutamine, and one molecule of ATP is hydrogenolyzed for each amidation. This is Cobyric acid synthase from Pelotomaculum thermopropionicum (strain DSM 13744 / JCM 10971 / SI).